Here is a 270-residue protein sequence, read N- to C-terminus: Flavin-dependent thymidylate synthase (270 aa).

The ThyX domain occupies 13-218; that stretch reads GFVRLVDQMG…PLAWAAFEEH (206 aa). FAD is bound by residues Ser-59, 82 to 84, and Glu-90; that span reads RHR. DUMP is bound by residues 79–82, 90–94, and Arg-157; these read QWFR and EISGR. Positions 82–92 match the ThyX motif motif; that stretch reads RHRTASVNEIS. Residues 173–175 and His-179 contribute to the FAD site; that span reads DLH. Position 184 (Arg-184) interacts with dUMP. The active-site Involved in ionization of N3 of dUMP, leading to its activation is Arg-184.

It belongs to the thymidylate synthase ThyX family. In terms of assembly, homotetramer. FAD is required as a cofactor.

It carries out the reaction dUMP + (6R)-5,10-methylene-5,6,7,8-tetrahydrofolate + NADPH + H(+) = dTMP + (6S)-5,6,7,8-tetrahydrofolate + NADP(+). Its pathway is pyrimidine metabolism; dTTP biosynthesis. In terms of biological role, catalyzes the reductive methylation of 2'-deoxyuridine-5'-monophosphate (dUMP) to 2'-deoxythymidine-5'-monophosphate (dTMP) while utilizing 5,10-methylenetetrahydrofolate (mTHF) as the methyl donor, and NADPH and FADH(2) as the reductant. This Thermus thermophilus (strain ATCC 27634 / DSM 579 / HB8) protein is Flavin-dependent thymidylate synthase.